The primary structure comprises 165 residues: 2-C-methyl-D-erythritol 2,4-cyclodiphosphate synthase (165 aa).

Asp8 and His10 together coordinate a divalent metal cation. 4-CDP-2-C-methyl-D-erythritol 2-phosphate-binding positions include 8–10 (DVH) and 34–35 (HS). His42 is a binding site for a divalent metal cation. 4-CDP-2-C-methyl-D-erythritol 2-phosphate contacts are provided by residues 56-58 (DIG), 61-65 (FPDTD), 100-106 (AQAPKMA), 132-135 (TTTE), Phe139, and Arg142.

It belongs to the IspF family. As to quaternary structure, homotrimer. The cofactor is a divalent metal cation.

The enzyme catalyses 4-CDP-2-C-methyl-D-erythritol 2-phosphate = 2-C-methyl-D-erythritol 2,4-cyclic diphosphate + CMP. It participates in isoprenoid biosynthesis; isopentenyl diphosphate biosynthesis via DXP pathway; isopentenyl diphosphate from 1-deoxy-D-xylulose 5-phosphate: step 4/6. In terms of biological role, involved in the biosynthesis of isopentenyl diphosphate (IPP) and dimethylallyl diphosphate (DMAPP), two major building blocks of isoprenoid compounds. Catalyzes the conversion of 4-diphosphocytidyl-2-C-methyl-D-erythritol 2-phosphate (CDP-ME2P) to 2-C-methyl-D-erythritol 2,4-cyclodiphosphate (ME-CPP) with a corresponding release of cytidine 5-monophosphate (CMP). The sequence is that of 2-C-methyl-D-erythritol 2,4-cyclodiphosphate synthase from Pectobacterium atrosepticum (strain SCRI 1043 / ATCC BAA-672) (Erwinia carotovora subsp. atroseptica).